The sequence spans 2809 residues: Fibrillin-3 (2809 aa).

A signal peptide spans 1–31 (MTLEGLYLARGPLARLLLAWSALLCMAGGQG). Positions 32–48 (RWDGALEAAGPGRVRRR) are excised as a propeptide. The EGF-like 1 domain occupies 147–179 (GQPICDRGCHNGGRCIGPNRCACVYGFMGPQCE). Intrachain disulfides connect Cys151/Cys161, Cys155/Cys167, and Cys169/Cys178. The region spanning 185-237 (GPCFGQVGPEGCQHQLTGLVCTKALCCATVGRAWGLPCELCPAQPHPCRRGFI) is the TB 1 domain. One can recognise an EGF-like 2; calcium-binding domain in the interval 247–288 (DVDECQAVPGLCQGGSCVNMVGSFHCRCPVGHRLSDSSAACE). 3 disulfides stabilise this stretch: Cys251-Cys263, Cys258-Cys272, and Cys274-Cys287. Residues 293 to 346 (GACFSVLFGGRCAGDLAGHYTRRQCCCDRGRCWAAGPVPELCPPRGSNEFQQLC) enclose the TB 2 domain. Asn406 carries N-linked (GlcNAc...) asparagine glycosylation. The EGF-like 3 domain occupies 408 to 448 (TIDICRHFTNLCLNGRCLPTPSSYRCECNVGYTQDVRGECI). Intrachain disulfides connect Cys412-Cys424, Cys419-Cys433, Cys435-Cys447, Cys453-Cys463, Cys458-Cys472, Cys474-Cys487, Cys493-Cys505, Cys500-Cys514, Cys516-Cys529, Cys535-Cys546, Cys541-Cys555, Cys557-Cys570, Cys576-Cys587, Cys582-Cys596, and Cys598-Cys611. Residues 449–488 (DVDECTSSPCHHGDCVNIPGTYHCRCYPGFQATPTRQACV) enclose the EGF-like 4; calcium-binding domain. In terms of domain architecture, EGF-like 5; calcium-binding spans 489-530 (DVDECIVSGGLCHLGRCVNTEGSFQCVCNAGFELSPDGKNCV). Residues 531 to 571 (DHNECATSTMCVNGVCLNEDGSFSCLCKPGFLLAPGGHYCM) form the EGF-like 6; calcium-binding domain. In terms of domain architecture, EGF-like 7; calcium-binding spans 572–612 (DIDECQTPGICVNGHCTNTEGSFRCQCLGGLAVGTDGRVCV). The region spanning 618–670 (STCYGAIEKGSCARPFPGTVTKSECCCANPDHGFGEPCQLCPAKDSAEFQALC) is the TB 3 domain. Residues 682-723 (DINECALDPEVCANGVCENLRGSYRCVCNLGYEAGASGKDCT) enclose the EGF-like 8; calcium-binding domain. Intrachain disulfides connect Cys686–Cys698, Cys693–Cys707, Cys709–Cys722, Cys728–Cys740, Cys735–Cys749, Cys751–Cys764, Cys770–Cys780, Cys775–Cys789, and Cys791–Cys804. One can recognise an EGF-like 9; calcium-binding domain in the interval 724–765 (DVDECALNSLLCDNGWCQNSPGSYSCSCPPGFHFWQDTEICK). One can recognise an EGF-like 10; calcium-binding domain in the interval 766–805 (DVDECLSSPCVSGVCRNLAGSYTCKCGPGSRLDPSGTFCL). The TB 4 domain occupies 810-861 (GTCWLKIQESRCEVNLQGASLRSECCATLGAAWGSPCERCEIDPACARGFAR). The EGF-like 11; calcium-binding domain maps to 869–910 (DVNECESFPGVCPNGRCVNTAGSFRCECPEGLMLDASGRLCV). 3 cysteine pairs are disulfide-bonded: Cys873-Cys885, Cys880-Cys894, and Cys896-Cys909. A TB 5 domain is found at 915-966 (EPCFLRWDEDECGVTLPGKYRMDVCCCSIGAVWGVECEACPDPESLEFASLC). The EGF-like 12; calcium-binding domain occupies 986–1027 (DVNECKVFPGLCTHGTCRNTVGSFHCACAGGFALDAQERNCT). Intrachain disulfides connect Cys990-Cys1002, Cys997-Cys1011, Cys1013-Cys1026, Cys1032-Cys1044, Cys1039-Cys1053, Cys1055-Cys1069, Cys1075-Cys1087, Cys1082-Cys1096, Cys1098-Cys1111, Cys1117-Cys1129, Cys1124-Cys1138, Cys1140-Cys1153, Cys1159-Cys1170, Cys1166-Cys1179, Cys1181-Cys1194, Cys1200-Cys1212, Cys1207-Cys1221, Cys1223-Cys1236, Cys1242-Cys1254, Cys1249-Cys1263, Cys1265-Cys1278, Cys1284-Cys1297, Cys1291-Cys1306, Cys1308-Cys1319, Cys1325-Cys1338, Cys1332-Cys1347, Cys1349-Cys1360, Cys1366-Cys1378, Cys1373-Cys1387, Cys1389-Cys1402, Cys1408-Cys1419, Cys1414-Cys1428, Cys1430-Cys1443, Cys1449-Cys1460, Cys1455-Cys1469, and Cys1471-Cys1484. N-linked (GlcNAc...) asparagine glycosylation occurs at Asn1025. One can recognise an EGF-like 13; calcium-binding domain in the interval 1028–1070 (DIDECRISPDLCGQGTCVNTPGSFECECFPGYESGFMLMKNCM). Residues 1071–1112 (DVDECARDPLLCRGGTCTNTDGSYKCQCPPGHELTAKGTACE) form the EGF-like 14; calcium-binding domain. An EGF-like 15; calcium-binding domain is found at 1113–1154 (DIDECSLSDGLCPHGQCVNVIGAFQCSCHAGFQSTPDRQGCV). The EGF-like 16; calcium-binding domain maps to 1155–1195 (DINECRVQNGGCDVHCINTEGSYRCSCGQGYSLMPDGRACA). The region spanning 1196-1237 (DVDECEENPRVCDQGHCTNMPGGHRCLCYDGFMATPDMRTCV) is the EGF-like 17 domain. In terms of domain architecture, EGF-like 18; calcium-binding spans 1238 to 1279 (DVDECDLNPHICLHGDCENTKGSFVCHCQLGYMVRKGATGCS). Residues 1280-1320 (DVDECEVGGHNCDSHASCLNIPGSFSCRCLPGWVGDGFECH) form the EGF-like 19; calcium-binding domain. The EGF-like 20; calcium-binding domain occupies 1321-1361 (DLDECVSQEHRCSPRGDCLNVPGSYRCTCRQGFAGDGFFCE). Residues 1362–1403 (DRDECAENVDLCDNGQCLNAPGGYRCECEMGFDPTEDHRACQ) form the EGF-like 21; calcium-binding domain. The EGF-like 22; calcium-binding domain occupies 1404 to 1444 (DVDECAQGNLCAFGSCENLPGMFRCICNGGYELDRGGGNCT). N-linked (GlcNAc...) asparagine glycosylation is present at Asn1442. The 41-residue stretch at 1445 to 1485 (DINECADPVNCINGVCINTPGSYLCSCPQDFELNPSGVGCV) folds into the EGF-like 23; calcium-binding domain. The TB 6 domain occupies 1490–1546 (GNCFLETHDRGDSGISCSAEIGVGVTRASCCCSLGRAWGNPCELCPMANTTEYRTLC). Asn1538 carries N-linked (GlcNAc...) asparagine glycosylation. Residues 1563–1604 (DIDECQELPGLCQGGDCVNTFGSFQCECPPGYHLSEHTRICE) form the EGF-like 24; calcium-binding domain. Cystine bridges form between Cys1567–Cys1579, Cys1574–Cys1588, Cys1590–Cys1603, Cys1609–Cys1621, Cys1616–Cys1630, and Cys1632–Cys1645. In terms of domain architecture, EGF-like 25; calcium-binding spans 1605–1646 (DIDECSTHSGICGPGTCYNTLGNYTCVCPAEYLQVNGGNNCM). A glycan (N-linked (GlcNAc...) asparagine) is linked at Asn1627. The TB 7 domain occupies 1651–1703 (SVCFRHYNGTCQNELAFNVTRKMCCCSYNIGQAWNRPCEACPTPISPDYQILC). N-linked (GlcNAc...) asparagine glycans are attached at residues Asn1658 and Asn1668. The 42-residue stretch at 1721-1762 (DIDECGEIPAICANGICINQIGSFRCECPAGFNYNSILLACE) folds into the EGF-like 26; calcium-binding domain. 21 disulfides stabilise this stretch: Cys1725–Cys1737, Cys1732–Cys1746, Cys1748–Cys1761, Cys1767–Cys1780, Cys1774–Cys1789, Cys1791–Cys1803, Cys1809–Cys1821, Cys1816–Cys1830, Cys1832–Cys1845, Cys1851–Cys1861, Cys1856–Cys1870, Cys1872–Cys1884, Cys1890–Cys1903, Cys1898–Cys1912, Cys1914–Cys1927, Cys1933–Cys1945, Cys1940–Cys1954, Cys1956–Cys1967, Cys1973–Cys1985, Cys1980–Cys1994, and Cys1996–Cys2009. In terms of domain architecture, EGF-like 27; calcium-binding spans 1763–1804 (DVDECGSRESPCQQNADCINIPGSYRCKCTRGYKLSPGGACV). Residues 1805–1846 (GRNECREIPNVCSHGDCMDTEGSYMCLCHRGFQASADQTLCM) enclose the EGF-like 28 domain. Residues 1847–1885 (DIDECDRQPCGNGTCKNIIGSYNCLCFPGFVVTHNGDCV) form the EGF-like 29; calcium-binding domain. The N-linked (GlcNAc...) asparagine glycan is linked to Asn1858. One can recognise an EGF-like 30; calcium-binding domain in the interval 1886 to 1928 (DFDECTTLVGQVCRFGHCLNTAGSFHCLCQDGFELTADGKNCV). The EGF-like 31; calcium-binding domain occupies 1929–1968 (DTNECLSLAGTCLPGTCQNLEGSFRCICPPGFQVQSDHCI). In terms of domain architecture, EGF-like 32; calcium-binding spans 1969 to 2010 (DIDECSEEPNLCLFGTCTNSPGSFQCLCPPGFVLSDNGHRCF). Residues 2015 to 2068 (SFCFTRFEAGKCSVPKAFNTTKTRCCCSKRPGEGWGDPCELCPQEGSAAFQELC) enclose the TB 8 domain. Asn2033 is a glycosylation site (N-linked (GlcNAc...) asparagine). One can recognise an EGF-like 33; calcium-binding domain in the interval 2084-2125 (DVNECAENPGVCTNGVCVNTDGSFRCECPFGYSLDFTGINCV). Disulfide bonds link Cys2088–Cys2100, Cys2095–Cys2109, Cys2111–Cys2124, Cys2130–Cys2141, Cys2136–Cys2150, Cys2152–Cys2164, Cys2170–Cys2181, Cys2177–Cys2190, Cys2192–Cys2205, Cys2211–Cys2225, Cys2218–Cys2234, Cys2236–Cys2250, Cys2256–Cys2268, Cys2263–Cys2277, and Cys2279–Cys2292. In terms of domain architecture, EGF-like 34; calcium-binding spans 2126–2165 (DTDECSVGHPCGQGTCTNVIGGFECACADGFEPGLMMTCE). Positions 2166–2206 (DIDECSLNPLLCAFRCHNTEGSYLCTCPAGYTLREDGAMCR) constitute an EGF-like 35; calcium-binding domain. The EGF-like 36; calcium-binding domain occupies 2207–2251 (DVDECADGQQDCHARGMECKNLIGTFACVCPPGMRPLPGSGEGCT). In terms of domain architecture, EGF-like 37; calcium-binding spans 2252-2293 (DDNECHAQPDLCVNGRCVNTAGSFRCDCDEGFQPSPTLTECH). The TB 9 domain occupies 2298-2351 (GPCFAEVLQTMCRSLSSSSEAVTRAECCCGGGRGWGPRCELCPLPGTSAYRKLC). The EGF-like 38; calcium-binding domain maps to 2363–2404 (DVDECRMLAHLCAHGECINSLGSFRCHCQAGYTPDATATTCL). 21 cysteine pairs are disulfide-bonded: Cys2367–Cys2379, Cys2374–Cys2388, Cys2390–Cys2403, Cys2409–Cys2420, Cys2416–Cys2429, Cys2431–Cys2444, Cys2450–Cys2461, Cys2457–Cys2470, Cys2472–Cys2483, Cys2489–Cys2502, Cys2496–Cys2511, Cys2513–Cys2526, Cys2532–Cys2542, Cys2538–Cys2551, Cys2553–Cys2566, Cys2572–Cys2584, Cys2579–Cys2593, Cys2595–Cys2608, Cys2614–Cys2625, Cys2621–Cys2634, and Cys2636–Cys2648. Residues 2405–2445 (DMDECSQVPKPCTFLCKNTKGSFLCSCPRGYLLEEDGRTCK) enclose the EGF-like 39; calcium-binding domain. The EGF-like 40; calcium-binding domain occupies 2446-2484 (DLDECTSRQHNCQFLCVNTVGAFTCRCPPGFTQHHQACF). The EGF-like 41; calcium-binding domain occupies 2485–2527 (DNDECSAQPGPCGAHGHCHNTPGSFRCECHQGFTLVSSGHGCE). An EGF-like 42; calcium-binding domain is found at 2528 to 2567 (DVNECDGPHRCQHGCQNQLGGYRCSCPQGFTQHSQWAQCV). Positions 2568 to 2609 (DENECALSPPTCGSASCRNTLGGFRCVCPSGFDFDQALGGCQ) constitute an EGF-like 43; calcium-binding domain. The EGF-like 44; calcium-binding domain occupies 2610 to 2649 (EVDECAGRRGPCSYSCANTPGGFLCGCPQGYFRAGQGHCV). Asn2713 is a glycosylation site (N-linked (GlcNAc...) asparagine).

It belongs to the fibrillin family. Probably forms intermolecular disulfide bonds either with other FBN3 molecules or with other components of the microfibrils. In terms of tissue distribution, predominantly expressed in connective tissues such as skeletal muscle, tendon, skin, perichondrium and periosteum. Highly expressed in fetal lung, brain, kidney. Expressed at low level in prostate, testis, mammary gland, uterus, ovary, placenta, bladder, adrenal gland, thyroid, fetal thymus, fetal liver, liver, fetal heart and heart.

Its subcellular location is the secreted. The protein localises to the extracellular space. It localises to the extracellular matrix. In terms of biological role, fibrillins are structural components of 10-12 nm extracellular calcium-binding microfibrils, which occur either in association with elastin or in elastin-free bundles. Fibrillin-containing microfibrils provide long-term force bearing structural support. This is Fibrillin-3 (FBN3) from Homo sapiens (Human).